The chain runs to 821 residues: Cation/H(+) antiporter 15 (821 aa).

Helical transmembrane passes span 37 to 57 (LPLF…FVFI), 65 to 82 (RVIS…SVLG), 97 to 117 (VMVL…LVGV), 131 to 151 (ALTI…AFSF), 166 to 186 (ILFL…RILA), 200 to 220 (MSAA…AIAL), 228 to 248 (FASL…VFVV), 268 to 288 (FHIC…DAIG), 292 to 312 (VFGA…LTLI), 318 to 338 (FVSG…TNIA), 350 to 370 (FLVI…VAFF), 378 to 398 (GITL…VLNV), and 410 to 430 (FATM…IVTI). Positions 800–821 (DFPESPVHSHETKVTYGLENPR) are disordered.

Belongs to the monovalent cation:proton antiporter 2 (CPA2) transporter (TC 2.A.37) family. CHX (TC 2.A.37.4) subfamily. As to expression, specifically expressed in pollen.

The protein resides in the membrane. In terms of biological role, may operate as a cation/H(+) antiporter. This is Cation/H(+) antiporter 15 (CHX15) from Arabidopsis thaliana (Mouse-ear cress).